A 124-amino-acid polypeptide reads, in one-letter code: Large ribosomal subunit protein bL12 (124 aa).

This sequence belongs to the bacterial ribosomal protein bL12 family. Homodimer. Part of the ribosomal stalk of the 50S ribosomal subunit. Forms a multimeric L10(L12)X complex, where L10 forms an elongated spine to which 2 to 4 L12 dimers bind in a sequential fashion. Binds GTP-bound translation factors.

Functionally, forms part of the ribosomal stalk which helps the ribosome interact with GTP-bound translation factors. Is thus essential for accurate translation. The protein is Large ribosomal subunit protein bL12 of Desulforamulus reducens (strain ATCC BAA-1160 / DSM 100696 / MI-1) (Desulfotomaculum reducens).